The chain runs to 123 residues: U11/U12 small nuclear ribonucleoprotein 25 kDa protein (123 aa).

Residues 32–123 form the Ubiquitin-like domain; that stretch reads MTVRVCKMDG…VSFIKKLRQK (92 aa).

Component of the U11/U12 snRNPs that are part of the U12-type spliceosome.

It localises to the nucleus. In Mus musculus (Mouse), this protein is U11/U12 small nuclear ribonucleoprotein 25 kDa protein (Snrnp25).